Here is a 290-residue protein sequence, read N- to C-terminus: Transcription cofactor vestigial-like protein 4 (290 aa).

The residue at position 1 (methionine 1) is an N-acetylmethionine. Residues alanine 17–proline 30 are compositionally biased toward basic and acidic residues. Disordered regions lie at residues alanine 17–glutamate 65, leucine 85–glutamate 106, leucine 140–arginine 161, and alanine 254–serine 290. Position 52 is a phosphoserine (serine 52). Over residues aspartate 92–isoleucine 105 the composition is skewed to basic and acidic residues. Serine 149 carries the phosphoserine modification. Residues proline 150 to arginine 161 show a composition bias toward polar residues. Threonine 153 carries the phosphothreonine modification. Residues proline 272–serine 290 show a composition bias toward low complexity. Serine 274 is subject to Phosphoserine.

This sequence belongs to the vestigial family. As to quaternary structure, interacts with TEFs. Interacts with IRF2BP2.

The protein localises to the nucleus. Its function is as follows. May act as a specific coactivator for the mammalian TEFs. The chain is Transcription cofactor vestigial-like protein 4 from Homo sapiens (Human).